Reading from the N-terminus, the 609-residue chain is MADSERSEAFGTPDDTPLSSNDAAELEQLRREAAVLREQLESAVGPQGTARSARDVHQLEARIDSLAARNSKLMETLKEARQQLLALREEVDRLGQPPSGYGVLLSTHDDDTVDVFTSGRKMRLTCSPNIEISLLRKGQTVRLNEALTVVEAGTFESVGEISTLREVLADGHRALVVGHADEERIVWLAEPLVAEDLPDGFPDALNDDTKPRKLRPGDSLLVDTKAGYAFERIPKAEVEDLVLEEVPDVSYEDIGGLTRQIEQIRDAVELPFLHKELYREYALRPPKGVLLYGPPGCGKTLIAKAVANSLAKKMAEVRGDDSREAKSYFLNIKGPELLNKFVGETERHIRLIFQRAREKASEGTPVIVFFDEMDSIFRTRGTGVSSDVETTVVPQLLSEIDGVEGLENVIVIGASNREDMIDPAILRPGRLDVKIKIERPDAEAAQDIYSKYLTETLPVHADDLAEFEGERPACIKAMIEKVVDRMYAEIDDNRFLEVTYANGDKEVMYFKDFNSGAMIQNVVDRAKKNAIKSVLETGQPGLRIQHLLDSIVDEFAENEDLPNTTNPDDWARISGKKGERIVYIRTLVTGKSSSASRAIDTESNLGQYL.

The disordered stretch occupies residues 1 to 25; sequence MADSERSEAFGTPDDTPLSSNDAAE. Positions 19–96 form a coiled coil; that stretch reads SSNDAAELEQ…LREEVDRLGQ (78 aa). 296-301 provides a ligand contact to ATP; that stretch reads GCGKTL. The docks into pockets in the proteasome alpha-ring stretch occupies residues 608–609; the sequence is YL.

Belongs to the AAA ATPase family. In terms of assembly, homohexamer. Assembles into a hexameric ring structure that caps the 20S proteasome core. Strongly interacts with the prokaryotic ubiquitin-like protein Pup through a hydrophobic interface; the interacting region of ARC lies in its N-terminal coiled-coil domain. There is one Pup binding site per ARC hexamer ring. Upon ATP-binding, the C-terminus of ARC interacts with the alpha-rings of the proteasome core, possibly by binding to the intersubunit pockets.

The protein operates within protein degradation; proteasomal Pup-dependent pathway. ATPase which is responsible for recognizing, binding, unfolding and translocation of pupylated proteins into the bacterial 20S proteasome core particle. May be essential for opening the gate of the 20S proteasome via an interaction with its C-terminus, thereby allowing substrate entry and access to the site of proteolysis. Thus, the C-termini of the proteasomal ATPase may function like a 'key in a lock' to induce gate opening and therefore regulate proteolysis. The sequence is that of Proteasome-associated ATPase from Mycobacterium marinum (strain ATCC BAA-535 / M).